The following is a 376-amino-acid chain: Nuclear egress protein 1 (376 aa).

The residue at position 19 (Ser19) is a Phosphoserine. The tract at residues Arg22 to Pro57 is disordered. The segment covering Val33–Asn45 has biased composition (polar residues). The segment at Cys106 to His211 adopts a CCCH-type zinc-finger fold. The interval Val316 to Pro376 is disordered. The segment covering Val317–Pro332 has biased composition (polar residues).

It belongs to the herpesviridae NEC1 protein family. Forms a heterohexameric complex with NEC2. Interacts with capsid vertex specific component 2/CVC2; this interaction directs the capsid to the host inner nuclear membrane to initiate budding. Post-translationally, phosphorylated at serine residues in the N-terminus. This phosphorylation regulates the localization within the inner nuclear membrane. Phosphorylation by viral kinase UL97 at Ser-19 plays an important role for correct viral nuclear egress complex (NEC) localization.

It localises to the host nucleus inner membrane. Its function is as follows. Plays an essential role in virion nuclear egress, the first step of virion release from infected cell. Within the host nucleus, NEC1 interacts with the newly formed capsid through the vertexes and directs it to the inner nuclear membrane by associating with NEC2. Induces the budding of the capsid at the inner nuclear membrane as well as its envelopment into the perinuclear space. There, the NEC1/NEC2 complex promotes the fusion of the enveloped capsid with the outer nuclear membrane and the subsequent release of the viral capsid into the cytoplasm where it will reach the secondary budding sites in the host Golgi or trans-Golgi network. The chain is Nuclear egress protein 1 from Homo sapiens (Human).